A 93-amino-acid chain; its full sequence is Putative regulatory protein LBL_1834 (93 aa).

Belongs to the RemA family.

This Leptospira borgpetersenii serovar Hardjo-bovis (strain L550) protein is Putative regulatory protein LBL_1834.